Reading from the N-terminus, the 440-residue chain is Serine/threonine-protein kinase VRK1 (440 aa).

One can recognise a Protein kinase domain in the interval 37–317; that stretch reads WKLGLPIGQG…LLEYTEKPLY (281 aa). Residues 43-51 and lysine 71 contribute to the ATP site; that span reads IGQGGFGCI. Residue lysine 71 forms a Glycyl lysine isopeptide (Lys-Gly) (interchain with G-Cter in SUMO2) linkage. The active-site Proton acceptor is aspartate 177. Phosphoserine; by PLK3 is present on serine 342. Residue serine 376 is modified to Phosphoserine. Position 378 is a phosphothreonine (threonine 378). 2 stretches are compositionally biased toward polar residues: residues 379–391 and 398–410; these read QVQEAAQTRSVES and SMSQPAAGCSSSD. The tract at residues 379–440 is disordered; the sequence is QVQEAAQTRS…GSRTRKKAQK (62 aa). The segment at 387–393 is required for interaction with the nucleosome; the sequence is RSVESQG.

This sequence belongs to the protein kinase superfamily. CK1 Ser/Thr protein kinase family. VRK subfamily. In terms of assembly, interacts with HDAC1, KAT2B, SETDB1, KDM3A and KDM4A. Associates with the nucleosome through interactions with nucleosome DNA, histone H2A and histone H2B; the interaction with H2A and H2B is mediated by the nucleosome acidic patch, a cluster of negatively charged residues of H2A and H2B forming a cleft within the nucleosome core. Autophosphorylated at various serine and threonine residues. Autophosphorylation does not impair its ability to phosphorylate p53/TP53. Phosphorylation by PLK3 leads to induction of Golgi fragmentation during mitosis. As to expression, highly expressed in testis. Expressed in liver, kidney and muscle. Weakly expressed in thymus, bone marrow and spleen.

The protein resides in the nucleus. Its subcellular location is the cytoplasm. It localises to the cajal body. The enzyme catalyses L-seryl-[protein] + ATP = O-phospho-L-seryl-[protein] + ADP + H(+). It carries out the reaction L-threonyl-[protein] + ATP = O-phospho-L-threonyl-[protein] + ADP + H(+). Active in presence of Mn(2+), Mg(2+) and Zn(2+), but is not functional with Ca(2+) or Cu(2+). Has a higher affinity for Mn(2+) than for Mg(2+). RAN inhibits its autophosphorylation and its ability to phosphorylate histone H3. Serine/threonine kinase involved in the regulation of key cellular processes including the cell cycle, nuclear condensation, transcription regulation, and DNA damage response. Controls chromatin organization and remodeling by mediating phosphorylation of histone H3 on 'Thr-4' and histone H2AX (H2aXT4ph). It also phosphorylates KAT5 in response to DNA damage, promoting KAT5 association with chromatin and histone acetyltransferase activity. Is involved in the regulation of cell cycle progression of neural progenitors, and is required for proper cortical neuronal migration. Is involved in neurite elongation and branching in motor neurons, and has an essential role in Cajal bodies assembly, acting through COIL phosphorylation and the control of coilin degradation. Involved in Golgi disassembly during the cell cycle: following phosphorylation by PLK3 during mitosis, required to induce Golgi fragmentation. Phosphorylates BANF1: disrupts its ability to bind DNA, reduces its binding to LEM domain-containing proteins and causes its relocalization from the nucleus to the cytoplasm. Phosphorylates TP53BP1 and p53/TP53 on 'Thr-18', preventing the interaction between p53/TP53 and MDM2. Phosphorylates ATF2 which activates its transcriptional activity. Phosphorylates JUN. This Mus musculus (Mouse) protein is Serine/threonine-protein kinase VRK1.